The sequence spans 351 residues: Holliday junction branch migration complex subunit RuvB (351 aa).

Residues 1–186 (MDEKIETRLI…FGIVQRLEFY (186 aa)) are large ATPase domain (RuvB-L). Residues Ile25, Arg26, Gly67, Lys70, Thr71, Thr72, 133–135 (EDF), Arg176, Tyr186, and Arg223 contribute to the ATP site. Thr71 is a binding site for Mg(2+). The small ATPAse domain (RuvB-S) stretch occupies residues 187 to 257 (RIPDLIHIVK…IAKEALDLLN (71 aa)). The interval 260–351 (IRGLDVMDRK…ENFDLLGKVE (92 aa)) is head domain (RuvB-H). 3 residues coordinate DNA: Arg296, Arg315, and Arg320.

The protein belongs to the RuvB family. In terms of assembly, homohexamer. Forms an RuvA(8)-RuvB(12)-Holliday junction (HJ) complex. HJ DNA is sandwiched between 2 RuvA tetramers; dsDNA enters through RuvA and exits via RuvB. An RuvB hexamer assembles on each DNA strand where it exits the tetramer. Each RuvB hexamer is contacted by two RuvA subunits (via domain III) on 2 adjacent RuvB subunits; this complex drives branch migration. In the full resolvosome a probable DNA-RuvA(4)-RuvB(12)-RuvC(2) complex forms which resolves the HJ.

It localises to the cytoplasm. The enzyme catalyses ATP + H2O = ADP + phosphate + H(+). Its function is as follows. The RuvA-RuvB-RuvC complex processes Holliday junction (HJ) DNA during genetic recombination and DNA repair, while the RuvA-RuvB complex plays an important role in the rescue of blocked DNA replication forks via replication fork reversal (RFR). RuvA specifically binds to HJ cruciform DNA, conferring on it an open structure. The RuvB hexamer acts as an ATP-dependent pump, pulling dsDNA into and through the RuvAB complex. RuvB forms 2 homohexamers on either side of HJ DNA bound by 1 or 2 RuvA tetramers; 4 subunits per hexamer contact DNA at a time. Coordinated motions by a converter formed by DNA-disengaged RuvB subunits stimulates ATP hydrolysis and nucleotide exchange. Immobilization of the converter enables RuvB to convert the ATP-contained energy into a lever motion, pulling 2 nucleotides of DNA out of the RuvA tetramer per ATP hydrolyzed, thus driving DNA branch migration. The RuvB motors rotate together with the DNA substrate, which together with the progressing nucleotide cycle form the mechanistic basis for DNA recombination by continuous HJ branch migration. Branch migration allows RuvC to scan DNA until it finds its consensus sequence, where it cleaves and resolves cruciform DNA. This chain is Holliday junction branch migration complex subunit RuvB, found in Coxiella burnetii (strain CbuG_Q212) (Coxiella burnetii (strain Q212)).